The chain runs to 464 residues: Argininosuccinate lyase (464 aa).

The protein belongs to the lyase 1 family. Argininosuccinate lyase subfamily.

It is found in the cytoplasm. The enzyme catalyses 2-(N(omega)-L-arginino)succinate = fumarate + L-arginine. Its pathway is amino-acid biosynthesis; L-arginine biosynthesis; L-arginine from L-ornithine and carbamoyl phosphate: step 3/3. The chain is Argininosuccinate lyase from Pseudomonas fluorescens (strain ATCC BAA-477 / NRRL B-23932 / Pf-5).